The primary structure comprises 234 residues: Large ribosomal subunit protein uL1 (234 aa).

The protein belongs to the universal ribosomal protein uL1 family. In terms of assembly, part of the 50S ribosomal subunit.

Binds directly to 23S rRNA. The L1 stalk is quite mobile in the ribosome, and is involved in E site tRNA release. Functionally, protein L1 is also a translational repressor protein, it controls the translation of the L11 operon by binding to its mRNA. The sequence is that of Large ribosomal subunit protein uL1 from Pseudoalteromonas translucida (strain TAC 125).